We begin with the raw amino-acid sequence, 507 residues long: ATP synthase subunit alpha, chloroplastic (507 aa).

170-177 (GDRQTGKT) is an ATP binding site.

The protein belongs to the ATPase alpha/beta chains family. In terms of assembly, F-type ATPases have 2 components, CF(1) - the catalytic core - and CF(0) - the membrane proton channel. CF(1) has five subunits: alpha(3), beta(3), gamma(1), delta(1), epsilon(1). CF(0) has four main subunits: a, b, b' and c.

It localises to the plastid. The protein localises to the chloroplast thylakoid membrane. It catalyses the reaction ATP + H2O + 4 H(+)(in) = ADP + phosphate + 5 H(+)(out). In terms of biological role, produces ATP from ADP in the presence of a proton gradient across the membrane. The alpha chain is a regulatory subunit. This Eucalyptus globulus subsp. globulus (Tasmanian blue gum) protein is ATP synthase subunit alpha, chloroplastic.